Consider the following 214-residue polypeptide: Phosphoheptose isomerase (214 aa).

In terms of domain architecture, SIS spans 51–209; it reads IASTFEDGGK…IDLVERLLGY (159 aa). 66-68 provides a ligand contact to substrate; the sequence is NGG. Zn(2+) contacts are provided by His-75 and Glu-79. Substrate is bound by residues Glu-79, 110-111, 136-138, Ser-141, and Gln-189; these read ND and STS. Zn(2+)-binding residues include Gln-189 and His-197.

Belongs to the SIS family. GmhA subfamily. Zn(2+) serves as cofactor.

It localises to the cytoplasm. It carries out the reaction 2 D-sedoheptulose 7-phosphate = D-glycero-alpha-D-manno-heptose 7-phosphate + D-glycero-beta-D-manno-heptose 7-phosphate. The protein operates within carbohydrate biosynthesis; D-glycero-D-manno-heptose 7-phosphate biosynthesis; D-glycero-alpha-D-manno-heptose 7-phosphate and D-glycero-beta-D-manno-heptose 7-phosphate from sedoheptulose 7-phosphate: step 1/1. In terms of biological role, catalyzes the isomerization of sedoheptulose 7-phosphate in D-glycero-D-manno-heptose 7-phosphate. The sequence is that of Phosphoheptose isomerase from Chlorobium limicola (strain DSM 245 / NBRC 103803 / 6330).